The sequence spans 164 residues: ATP synthase subunit b (164 aa).

Residues 12–32 form a helical membrane-spanning segment; that stretch reads FILVTGSVIVLLLLIKAFAWG.

The protein belongs to the ATPase B chain family. F-type ATPases have 2 components, F(1) - the catalytic core - and F(0) - the membrane proton channel. F(1) has five subunits: alpha(3), beta(3), gamma(1), delta(1), epsilon(1). F(0) has three main subunits: a(1), b(2) and c(10-14). The alpha and beta chains form an alternating ring which encloses part of the gamma chain. F(1) is attached to F(0) by a central stalk formed by the gamma and epsilon chains, while a peripheral stalk is formed by the delta and b chains.

Its subcellular location is the cell membrane. Its function is as follows. F(1)F(0) ATP synthase produces ATP from ADP in the presence of a proton or sodium gradient. F-type ATPases consist of two structural domains, F(1) containing the extramembraneous catalytic core and F(0) containing the membrane proton channel, linked together by a central stalk and a peripheral stalk. During catalysis, ATP synthesis in the catalytic domain of F(1) is coupled via a rotary mechanism of the central stalk subunits to proton translocation. Component of the F(0) channel, it forms part of the peripheral stalk, linking F(1) to F(0). The polypeptide is ATP synthase subunit b (Streptococcus equi subsp. zooepidemicus (strain MGCS10565)).